We begin with the raw amino-acid sequence, 394 residues long: Na(+)/H(+) antiporter NhaA (394 aa).

Transmembrane regions (helical) follow at residues 14–34 (AGGL…NSAL), 59–79 (LLLW…GLEV), 95–115 (VFPA…YLLF), 125–145 (GWAI…ALLG), 154–174 (VFLL…IALF), 179–199 (VSLQ…YMNW), 213–233 (LVLW…GVIV), 254–274 (GLHP…NAGV), 292–312 (IATG…WLAV), 328–348 (IFAV…IASL), and 363–383 (LGIL…LRLV).

This sequence belongs to the NhaA Na(+)/H(+) (TC 2.A.33) antiporter family.

The protein localises to the cell inner membrane. The enzyme catalyses Na(+)(in) + 2 H(+)(out) = Na(+)(out) + 2 H(+)(in). Functionally, na(+)/H(+) antiporter that extrudes sodium in exchange for external protons. The sequence is that of Na(+)/H(+) antiporter NhaA from Yersinia pestis bv. Antiqua (strain Angola).